Consider the following 630-residue polypeptide: Zinc finger protein 37 homolog (630 aa).

3 disordered regions span residues 1-45 (MSVS…SAAE), 77-172 (KPDM…PSKK), and 193-285 (HSRN…KHEK). Basic and acidic residues predominate over residues 14-30 (ETVDRRRSAETTKEAGR). In terms of domain architecture, KRAB spans 32–103 (LEMAVSEPEA…KGKRPSQGCP (72 aa)). Position 42 is a phosphoserine (S42). Positions 110-122 (KQKETDGKVQKDD) are enriched in basic and acidic residues. A compositionally biased stretch (basic residues) spans 161-172 (NNLHKKHVPSKK). Basic and acidic residues predominate over residues 193 to 206 (HSRNCVKRKSDAAK). Positions 221-231 (KGKKQTGKKHE) are enriched in basic residues. Basic and acidic residues-rich tracts occupy residues 232-243 (KLSSHSSSDKCN) and 260-274 (IKQD…HEKS). 2 C2H2-type zinc fingers span residues 293–315 (YECN…QRVH) and 321–343 (YECN…QRTH). The C2H2-type 3; atypical zinc finger occupies 349–367 (YECIQCGKAHGHKHALTDH). 9 consecutive C2H2-type zinc fingers follow at residues 377 to 399 (YECA…VRSH), 405 to 427 (YECK…VRTH), 433 to 455 (YECN…MRIH), 461 to 483 (FECN…QRTH), 489 to 511 (YKCN…MRTH), 517 to 539 (FECN…QRVH), 545 to 567 (YECN…QRTH), 573 to 595 (YECN…QRSH), and 601 to 623 (YECN…VKTH).

The protein belongs to the krueppel C2H2-type zinc-finger protein family. In terms of tissue distribution, expressed at low level in several tissues including fetal cartilage.

The protein resides in the nucleus. May be involved in transcriptional regulation. The chain is Zinc finger protein 37 homolog (ZFP37) from Homo sapiens (Human).